Here is a 494-residue protein sequence, read N- to C-terminus: Prenylcysteine oxidase 1-like (494 aa).

The N-terminal stretch at 1-22 is a signal peptide; that stretch reads MARAAPLLAALTALLAAAAAGG. A glycan (N-linked (GlcNAc...) asparagine) is linked at asparagine 342.

The protein belongs to the prenylcysteine oxidase family. The cofactor is FAD.

The protein localises to the secreted. In terms of biological role, likely to have oxidoreductase activity. Required in the mevalonate pathway to regulate prenylation and enhances the bactericidal activity of neutrophils. The protein is Prenylcysteine oxidase 1-like (PCYOX1L) of Homo sapiens (Human).